A 383-amino-acid polypeptide reads, in one-letter code: MAQQSQRPISNRHISLLNRNGLILLLLLALFVILGVFLPLTKSSLFMFPNTTSSSLSPSSSLSVSDWRDYSLAQAVKFVAKNETVIVCAVSYPFLPFLNNWLISISRQKHQEKVLVIAEDYATLYKVNEKWPGHAVLIPPALDPQSAHKFGSQGFFNLTSRRPQHLLNILELGYNVMYNDVDMVWLQDPFDYLQGSYDAYFMDDMIAIKPLNHSHDLPPLSRSGVTYVCSCMIFLRSTDGGKLLMKTWVEEIQAQPWNNTQAKKPHDQPAFNRALHKTANQVKVYLLPQSAFPSGGLYFRNETWVNETRGKHVIVHNNYIIGYDKKMKRFQDFSLWLVDDHALESPLGKLEIYQEQNTTTEGKNLTKIVRKQRKNRGKKHKLP.

The Cytoplasmic segment spans residues 1–20 (MAQQSQRPISNRHISLLNRN). The helical; Signal-anchor for type II membrane protein transmembrane segment at 21–41 (GLILLLLLALFVILGVFLPLT) threads the bilayer. Residues 42–383 (KSSLFMFPNT…KNRGKKHKLP (342 aa)) lie on the Lumenal side of the membrane. N-linked (GlcNAc...) asparagine glycosylation is found at Asn50, Asn82, and Asn157. A DXD motif motif is present at residues 180 to 182 (DVD). Residues Asn212, Asn258, Asn301, Asn306, Asn357, and Asn364 are each glycosylated (N-linked (GlcNAc...) asparagine).

Belongs to the glycosyltransferase 77 family. Mn(2+) is required as a cofactor. The cofactor is Mg(2+). Post-translationally, glycosylated. In terms of tissue distribution, expressed around trichome support cells in the adaxial epidermis of rosette leaves, in cauline leaves, petals and both the proximal and distal ends of siliques.

The protein resides in the golgi apparatus membrane. Functionally, catalyzes the transfer of D-xylose from UDP-alpha-D-xylose onto L-fucose. Probably involved in the biosynthesis of rhamnogalacturonan II (RG-II) through xylosylation of the internal fucose moiety of the A-chain of RG-II, a structurally complex pectic polysaccharide of the primary cell wall. RG-II is essential for the cell wall integrity of rapidly growing tissues such as roots and pollen tube growth and elongation. In Arabidopsis thaliana (Mouse-ear cress), this protein is UDP-D-xylose:L-fucose alpha-1,3-D-xylosyltransferase 3.